Here is a 531-residue protein sequence, read N- to C-terminus: Putative lipase ATG15 (531 aa).

Topologically, residues 1–11 are cytoplasmic; that stretch reads MKPGIKISKRY. The helical; Signal-anchor for type II membrane protein transmembrane segment at 12 to 31 threads the bilayer; sequence SARNASVITVLLLLIYLIYI. The Lumenal portion of the chain corresponds to 32–531; the sequence is NKETIQTKYQ…WIGICTEYGI (500 aa). Residues Asn178 and Asn207 are each glycosylated (N-linked (GlcNAc...) asparagine). Ser340 acts as the Charge relay system in catalysis. Residues 482 to 513 are disordered; the sequence is VPKKHKSSSSTASSTSAETSTLTVGPSPPEKT. The segment covering 489–502 has biased composition (low complexity); that stretch reads SSSTASSTSAETST.

This sequence belongs to the AB hydrolase superfamily. Lipase family. Binds to both phosphatidylinositol (PI) and phosphatidylinositol 3,5-bisphosphate (PIP2).

The protein resides in the endosome. It localises to the multivesicular body membrane. Its subcellular location is the prevacuolar compartment membrane. It catalyses the reaction a triacylglycerol + H2O = a diacylglycerol + a fatty acid + H(+). Functionally, lipase which is essential for lysis of subvacuolar cytoplasm to vacuole targeted bodies and intravacuolar autophagic bodies. Involved in the lysis of intravacuolar multivesicular body (MVB) vesicles. The intravacuolar membrane disintegration by ATG15 is critical to life span extension. This is Putative lipase ATG15 (ATG15) from Kluyveromyces lactis (strain ATCC 8585 / CBS 2359 / DSM 70799 / NBRC 1267 / NRRL Y-1140 / WM37) (Yeast).